The sequence spans 135 residues: Sex-regulated protein janus-A (135 aa).

K37 is a binding site for substrate. The Proton acceptor role is filled by H63. Substrate is bound at residue 104–106 (SQG).

It belongs to the janus family.

JanA and janB regulate somatic sex differentiation. This chain is Sex-regulated protein janus-A (janA), found in Drosophila orena (Fruit fly).